Consider the following 73-residue polypeptide: Translation initiation factor IF-1 (73 aa).

The 72-residue stretch at 1 to 72 folds into the S1-like domain; the sequence is MAKEDVIEVE…SRGRITYRYR (72 aa).

This sequence belongs to the IF-1 family. As to quaternary structure, component of the 30S ribosomal translation pre-initiation complex which assembles on the 30S ribosome in the order IF-2 and IF-3, IF-1 and N-formylmethionyl-tRNA(fMet); mRNA recruitment can occur at any time during PIC assembly.

The protein resides in the cytoplasm. Functionally, one of the essential components for the initiation of protein synthesis. Stabilizes the binding of IF-2 and IF-3 on the 30S subunit to which N-formylmethionyl-tRNA(fMet) subsequently binds. Helps modulate mRNA selection, yielding the 30S pre-initiation complex (PIC). Upon addition of the 50S ribosomal subunit IF-1, IF-2 and IF-3 are released leaving the mature 70S translation initiation complex. The polypeptide is Translation initiation factor IF-1 (Rubrobacter xylanophilus (strain DSM 9941 / JCM 11954 / NBRC 16129 / PRD-1)).